We begin with the raw amino-acid sequence, 133 residues long: Small ribosomal subunit protein uS8 (133 aa).

The protein belongs to the universal ribosomal protein uS8 family. Part of the 30S ribosomal subunit. Contacts proteins S5 and S12.

Functionally, one of the primary rRNA binding proteins, it binds directly to 16S rRNA central domain where it helps coordinate assembly of the platform of the 30S subunit. The polypeptide is Small ribosomal subunit protein uS8 (Oenococcus oeni (strain ATCC BAA-331 / PSU-1)).